The chain runs to 643 residues: Lysophospholipase ARB_05919 (643 aa).

Residues 1–22 form the signal peptide; sequence MMFIPATLGTFVLASLLPATVG. The 548-residue stretch at 50-597 folds into the PLA2c domain; it reads DCPSTKPAVR…KMYCWDGTLN (548 aa). Residues Asn-142, Asn-176, Asn-195, Asn-293, Asn-466, Asn-472, Asn-482, Asn-503, Asn-524, Asn-533, Asn-552, and Asn-597 are each glycosylated (N-linked (GlcNAc...) asparagine).

The protein belongs to the lysophospholipase family.

It is found in the secreted. It carries out the reaction a 1-acyl-sn-glycero-3-phosphocholine + H2O = sn-glycerol 3-phosphocholine + a fatty acid + H(+). In terms of biological role, catalyzes the release of fatty acids from lysophospholipids. Phospholipase B may well contribute to pathogenicity by abetting the fungus in damaging host cell membranes. This Arthroderma benhamiae (strain ATCC MYA-4681 / CBS 112371) (Trichophyton mentagrophytes) protein is Lysophospholipase ARB_05919.